The following is a 214-amino-acid chain: Large ribosomal subunit protein uL3 (214 aa).

The disordered stretch occupies residues 136-156; it reads THGNSLSHRAPGSIGQNQTPG. N5-methylglutamine is present on Gln-153.

The protein belongs to the universal ribosomal protein uL3 family. As to quaternary structure, part of the 50S ribosomal subunit. Forms a cluster with proteins L14 and L19. In terms of processing, methylated by PrmB.

In terms of biological role, one of the primary rRNA binding proteins, it binds directly near the 3'-end of the 23S rRNA, where it nucleates assembly of the 50S subunit. In Thioalkalivibrio sulfidiphilus (strain HL-EbGR7), this protein is Large ribosomal subunit protein uL3.